A 308-amino-acid chain; its full sequence is Pantothenate kinase (308 aa).

93 to 100 (GSVAVGKS) contributes to the ATP binding site.

It belongs to the prokaryotic pantothenate kinase family.

The protein localises to the cytoplasm. It catalyses the reaction (R)-pantothenate + ATP = (R)-4'-phosphopantothenate + ADP + H(+). The protein operates within cofactor biosynthesis; coenzyme A biosynthesis; CoA from (R)-pantothenate: step 1/5. The sequence is that of Pantothenate kinase from Corynebacterium aurimucosum (strain ATCC 700975 / DSM 44827 / CIP 107346 / CN-1) (Corynebacterium nigricans).